Here is a 124-residue protein sequence, read N- to C-terminus: Aspartate 1-decarboxylase (124 aa).

S25 functions as the Schiff-base intermediate with substrate; via pyruvic acid in the catalytic mechanism. At S25 the chain carries Pyruvic acid (Ser). Residue T57 coordinates substrate. The Proton donor role is filled by Y58. G73 to A75 is a binding site for substrate.

It belongs to the PanD family. As to quaternary structure, heterooctamer of four alpha and four beta subunits. Pyruvate is required as a cofactor. Post-translationally, is synthesized initially as an inactive proenzyme, which is activated by self-cleavage at a specific serine bond to produce a beta-subunit with a hydroxyl group at its C-terminus and an alpha-subunit with a pyruvoyl group at its N-terminus.

Its subcellular location is the cytoplasm. It carries out the reaction L-aspartate + H(+) = beta-alanine + CO2. The protein operates within cofactor biosynthesis; (R)-pantothenate biosynthesis; beta-alanine from L-aspartate: step 1/1. In terms of biological role, catalyzes the pyruvoyl-dependent decarboxylation of aspartate to produce beta-alanine. This chain is Aspartate 1-decarboxylase, found in Clostridium botulinum (strain Alaska E43 / Type E3).